The chain runs to 400 residues: Tryptophan synthase beta chain (400 aa).

N6-(pyridoxal phosphate)lysine is present on Lys-91.

The protein belongs to the TrpB family. As to quaternary structure, tetramer of two alpha and two beta chains. Requires pyridoxal 5'-phosphate as cofactor.

The enzyme catalyses (1S,2R)-1-C-(indol-3-yl)glycerol 3-phosphate + L-serine = D-glyceraldehyde 3-phosphate + L-tryptophan + H2O. Its pathway is amino-acid biosynthesis; L-tryptophan biosynthesis; L-tryptophan from chorismate: step 5/5. Its function is as follows. The beta subunit is responsible for the synthesis of L-tryptophan from indole and L-serine. The polypeptide is Tryptophan synthase beta chain (Listeria monocytogenes serotype 4b (strain CLIP80459)).